The following is a 245-amino-acid chain: Dehydrogenase/reductase SDR family member 6 (245 aa).

NAD(+)-binding positions include 16-18 (QGI), D37, and D58. R144 lines the substrate pocket. The active-site Proton acceptor is the Y147. NAD(+) is bound by residues K151 and 180–184 (VDTPS). Residues R188 and R205 each contribute to the substrate site.

The protein belongs to the short-chain dehydrogenases/reductases (SDR) family. In terms of assembly, homotetramer. Detected in liver, spleen and macrophages. Widely expressed.

The protein resides in the cytoplasm. The enzyme catalyses cis-4-hydroxy-L-proline + NAD(+) = 4-oxo-L-proline + NADH + H(+). It carries out the reaction (R)-3-hydroxybutanoate + NAD(+) = acetoacetate + NADH + H(+). It participates in amino-acid metabolism. The protein operates within siderophore biosynthesis. Functionally, NAD(H)-dependent dehydrogenase/reductase with a preference for cyclic substrates. Catalyzes stereoselective conversion of 4-oxo-L-proline to cis-4-hydroxy-L-proline, likely a detoxification mechanism for ketoprolines. Mediates the formation of 2,5-dihydroxybenzoate (2,5-DHBA), a siderophore that chelates free cytoplasmic iron and associates with LCN2, thereby regulating iron transport and homeostasis while protecting cells against free radical-induced oxidative stress. The iron-siderophore complex is imported into mitochondria, providing an iron source for mitochondrial metabolic processes in particular heme synthesis. May act as a 3-hydroxybutyrate dehydrogenase. Its function is as follows. (Microbial infection) May play a role in susceptibility to bacterial infection by providing an assimilable source of iron that is exploited by pathogenic bacteria. Host iron-siderophore complexes can be used by bacteria to promote their own growth and pathogenicity. This is Dehydrogenase/reductase SDR family member 6 from Mus musculus (Mouse).